Here is a 303-residue protein sequence, read N- to C-terminus: Porphobilinogen deaminase (303 aa).

The residue at position 241 (Cys-241) is an S-(dipyrrolylmethanemethyl)cysteine.

This sequence belongs to the HMBS family. In terms of assembly, monomer. Requires dipyrromethane as cofactor.

It catalyses the reaction 4 porphobilinogen + H2O = hydroxymethylbilane + 4 NH4(+). The protein operates within porphyrin-containing compound metabolism; protoporphyrin-IX biosynthesis; coproporphyrinogen-III from 5-aminolevulinate: step 2/4. It participates in porphyrin-containing compound metabolism; chlorophyll biosynthesis. Tetrapolymerization of the monopyrrole PBG into the hydroxymethylbilane pre-uroporphyrinogen in several discrete steps. This is Porphobilinogen deaminase from Roseiflexus sp. (strain RS-1).